A 154-amino-acid polypeptide reads, in one-letter code: MKRIEAYTDGACSGNPGPGGWGALLRWNGNEKELKGGEAETTNNRMELMAAISALSALKEPCEVDLYTDSVYVRDGISGWIEGWKRNGWKTAAKKPVKNAELWQALDEARKAHKVTWHWIKGHAGHPENERADELARAGMEPFKYAGHRTLKVK.

An RNase H type-1 domain is found at 1–141; it reads MKRIEAYTDG…ADELARAGME (141 aa). Residues Asp9, Glu47, Asp69, and Asp133 each coordinate Mg(2+).

It belongs to the RNase H family. As to quaternary structure, monomer. It depends on Mg(2+) as a cofactor.

Its subcellular location is the cytoplasm. The catalysed reaction is Endonucleolytic cleavage to 5'-phosphomonoester.. Endonuclease that specifically degrades the RNA of RNA-DNA hybrids. The protein is Ribonuclease H of Brucella abortus (strain 2308).